A 204-amino-acid chain; its full sequence is INSIG protein homolog (204 aa).

A run of 5 helical transmembrane segments spans residues 5 to 27 (ISEA…HSHV), 47 to 64 (FWFP…AELR), 76 to 97 (ARQA…ALVH), 101 to 118 (VVPV…TWCV), and 124 to 145 (GAAC…LVQL). His26 contacts a 1,2-diacyl-sn-glycerol. Tyr150 contributes to the a 1,2-diacyl-sn-glycerol binding site. Residues 162-179 (PFLAPLYFAFGVVAALLG) form a helical membrane-spanning segment.

Belongs to the INSIG family. Homotrimer.

The protein localises to the membrane. Functionally, diacylglycerol-binding protein. The polypeptide is INSIG protein homolog (Mycolicibacterium vanbaalenii (strain DSM 7251 / JCM 13017 / BCRC 16820 / KCTC 9966 / NRRL B-24157 / PYR-1) (Mycobacterium vanbaalenii)).